The sequence spans 823 residues: DNA ligase (823 aa).

NAD(+)-binding positions include 31–35 and 73–74; these read DDAFD and SQ. Lys-100 acts as the N6-AMP-lysine intermediate in catalysis. Arg-121, Glu-163, Lys-275, and Lys-296 together coordinate NAD(+). Zn(2+) contacts are provided by Cys-387, Cys-390, Cys-403, and Cys-408. 3 BRCT domains span residues 562 to 655, 654 to 742, and 741 to 823; these read QAES…TGET, ETVH…DAHV, and HVHA…TPGT.

Belongs to the NAD-dependent DNA ligase family. LigA subfamily. Mg(2+) serves as cofactor. It depends on Mn(2+) as a cofactor.

It carries out the reaction NAD(+) + (deoxyribonucleotide)n-3'-hydroxyl + 5'-phospho-(deoxyribonucleotide)m = (deoxyribonucleotide)n+m + AMP + beta-nicotinamide D-nucleotide.. Functionally, DNA ligase that catalyzes the formation of phosphodiester linkages between 5'-phosphoryl and 3'-hydroxyl groups in double-stranded DNA using NAD as a coenzyme and as the energy source for the reaction. It is essential for DNA replication and repair of damaged DNA. In Treponema pallidum (strain Nichols), this protein is DNA ligase.